The following is a 474-amino-acid chain: L-arabinose isomerase (474 aa).

Mn(2+) is bound by residues E306, E331, H348, and H447.

It belongs to the arabinose isomerase family. It depends on Mn(2+) as a cofactor.

The enzyme catalyses beta-L-arabinopyranose = L-ribulose. Its pathway is carbohydrate degradation; L-arabinose degradation via L-ribulose; D-xylulose 5-phosphate from L-arabinose (bacterial route): step 1/3. In terms of biological role, catalyzes the conversion of L-arabinose to L-ribulose. The sequence is that of L-arabinose isomerase from Leuconostoc mesenteroides subsp. mesenteroides (strain ATCC 8293 / DSM 20343 / BCRC 11652 / CCM 1803 / JCM 6124 / NCDO 523 / NBRC 100496 / NCIMB 8023 / NCTC 12954 / NRRL B-1118 / 37Y).